The following is a 590-amino-acid chain: Synaptotagmin-3 (590 aa).

Over 1 to 54 the chain is Vesicular; sequence MSGDYEDDLCRRALILVSDLCARVRDADTNDRCQEFNDRIRGYPRGPDADISVS. The segment at 10-34 is cysteine motif; sequence CRRALILVSDLCARVRDADTNDRCQ. Residues 55–75 form a helical membrane-spanning segment; the sequence is LLSVIVTFCGIVLLGVSLFVS. The Cytoplasmic portion of the chain corresponds to 76–590; that stretch reads WKLCWVPWRD…KGLSEKENSE (515 aa). Disordered regions lie at residues 143-220, 234-260, and 273-295; these read AELL…VTSL, TQQTLTSQPDPSSEERPPALPLPLPGG, and ELYQGTGPGGRRSGGGPGSGEAG. Low complexity predominate over residues 185–203; the sequence is SPELPSEGGAGSGLLLLPP. Positions 234–243 are enriched in polar residues; it reads TQQTLTSQPD. Residues 278 to 295 are compositionally biased toward gly residues; it reads TGPGGRRSGGGPGSGEAG. Position 284 is an omega-N-methylarginine (R284). C2 domains are found at residues 299–420 and 431–565; these read PCGR…PLWR and DLGE…EHWH. The Ca(2+) site is built by D330, D336, D388, F389, D390, S393, D396, D462, D468, D522, and D524.

This sequence belongs to the synaptotagmin family. Homodimer; disulfide-linked via the cysteine motif. Can also form heterodimers with SYT6, SYT9 and SYT10. The cofactor is Ca(2+). In terms of tissue distribution, expressed in melanocytes.

The protein localises to the cell membrane. The protein resides in the cytoplasmic vesicle. It localises to the secretory vesicle membrane. Functionally, ca(2+) sensor involved in Ca(2+)-dependent exocytosis of secretory vesicles through Ca(2+) and phospholipid binding to the C2 domain. Ca(2+) induces binding of the C2-domains to phospholipid membranes and to assembled SNARE-complexes; both actions contribute to triggering exocytosis. Plays a role in dendrite formation by melanocytes. The polypeptide is Synaptotagmin-3 (SYT3) (Homo sapiens (Human)).